We begin with the raw amino-acid sequence, 193 residues long: Peptidyl-tRNA hydrolase (193 aa).

A tRNA-binding site is contributed by Y16. H21 functions as the Proton acceptor in the catalytic mechanism. Residues Y66, N68, and N114 each coordinate tRNA.

The protein belongs to the PTH family. As to quaternary structure, monomer.

The protein resides in the cytoplasm. The enzyme catalyses an N-acyl-L-alpha-aminoacyl-tRNA + H2O = an N-acyl-L-amino acid + a tRNA + H(+). Its function is as follows. Hydrolyzes ribosome-free peptidyl-tRNAs (with 1 or more amino acids incorporated), which drop off the ribosome during protein synthesis, or as a result of ribosome stalling. Catalyzes the release of premature peptidyl moieties from peptidyl-tRNA molecules trapped in stalled 50S ribosomal subunits, and thus maintains levels of free tRNAs and 50S ribosomes. In Geobacter sulfurreducens (strain ATCC 51573 / DSM 12127 / PCA), this protein is Peptidyl-tRNA hydrolase.